A 667-amino-acid polypeptide reads, in one-letter code: MSLPRLCLGELINEDIHTWNSLCRQEITIKTYDNSIPISESSKKIRNQQYLTITFPKSSQPGGNKRLRPSEIQVTVPRHDKRNLDELQKPAHIWIRHSLRKKFQSPSINLIVRRQASFRHPYTHITHSKKAESKKYKDDKKETALKKISKKDTGPHEVDEKPKRRNKADKTPSKSSHGSQLSKKSKSKSETNPESKDSISVSIKHQKKEKRYSKDSKEMDFESTSTKKYSKSSKNNSDAVSETCSKNSSNVGLMVHLGESDAESMEFDMWLKNYSQNNSKKPTKKDAKKDAKGKGSDAESVDSKDAKKDKKGATKDTKKGAKKDTESTDAESGDSKDAKKGKKESKKDKKKDAKKDAASDAESGDSKDAKKDSKKGKKDSKKDNKKKDAKKDAESTDAESGDSKDAKKDSKKGKKDSKKDDKKKDAKKDAESTDAESGDSKNAKKDSKKGKKDDKKKDAKKDAVSTDADSESEGDAKKSKKDSKKDKKDLKKDDQKKPAMKSKESTETESDWESKKVKRDSKKDTKKTAKKATESSGAESDVSSKRYLKKTEMFKSSDAESEESLFKPGSKKRVDESDATSTDSKKDAVEPKRGIKMPSRRTTFKEKGKKIGTGRVPPSRERPPLPPCEPILPSPRVKRLCRCQMPPPPPKPRYAPLPEAKWIHKLL.

2 disordered regions span residues 121 to 251 and 275 to 634; these read PYTH…SSNV and SQNN…ILPS. Residues 129 to 172 are compositionally biased toward basic and acidic residues; that stretch reads KKAESKKYKDDKKETALKKISKKDTGPHEVDEKPKRRNKADKTP. Residues 173-182 show a composition bias toward low complexity; the sequence is SKSSHGSQLS. A compositionally biased stretch (basic and acidic residues) spans 187-197; the sequence is SKSETNPESKD. Low complexity predominate over residues 223 to 237; sequence STSTKKYSKSSKNNS. The segment covering 238–251 has biased composition (polar residues); that stretch reads DAVSETCSKNSSNV. Basic and acidic residues-rich tracts occupy residues 284 to 326, 345 to 371, 380 to 394, 417 to 431, 438 to 464, 483 to 506, 521 to 533, 549 to 558, and 583 to 593; these read KKDA…KDTE, SKKD…DAKK, SKKD…KDAE, GDSK…KDAV, SKKD…KEST, SKKD…KKAT, KKTEMFKSSD, and DSKKDAVEPKR. Tandem repeats lie at residues 287-305, 306-337, 338-368, 369-405, 406-442, 443-475, 476-516, 517-547, and 548-569. Residues 287–569 are 9 X approximate tandem repeats; sequence AKKDAKGKGS…ESEESLFKPG (283 aa). Positions 624-633 are enriched in pro residues; it reads PLPPCEPILP.

Interacts with proteins of spermatozoa head including ACTL7A, CCIN, FAM209A and SPACA1; the interactions may be necessary for proper acrosome attachment to the nuclear envelope. As to expression, testis.

Its subcellular location is the cytoplasm. The protein resides in the cytoskeleton. The protein localises to the perinuclear theca. It is found in the calyx. In terms of biological role, plays a role in the establishment of normal sperm morphology during spermatogenesis and is required for acrosome attachment to the nuclear envelope. The polypeptide is Cylicin-1 (CYLC1) (Bos taurus (Bovine)).